A 175-amino-acid chain; its full sequence is ADP-ribosylation factor 6 (175 aa).

The N-myristoyl glycine moiety is linked to residue G2. Residues G20 to T27, D63 to Q67, and N122 to D125 contribute to the GTP site.

Belongs to the small GTPase superfamily. Arf family. In terms of tissue distribution, expressed in the head (at protein level).

The protein resides in the golgi apparatus. With respect to regulation, activation is generally mediated by a guanine exchange factor (GEF), while inactivation through hydrolysis of bound GTP is catalyzed by a GTPase activating protein (GAP). May be activated by Efa6. Its function is as follows. GTP-binding protein involved in protein trafficking; may modulate vesicle budding and uncoating within the Golgi apparatus. Promotes cell movement and remodeling of the actin cytoskeleton during compound eye morphogenesis. Required for normal ethanol-induced tolerance and preference. Probably after Efa6-mediated activation, counteracts ethanol-induced sedation. This chain is ADP-ribosylation factor 6, found in Drosophila melanogaster (Fruit fly).